The chain runs to 758 residues: Deoxynucleotidyltransferase terminal-interacting protein 2 (758 aa).

Over residues 1–21 (MVVTRSGLSRTRLQESSQQKR) the composition is skewed to polar residues. Positions 1–176 (MVVTRSGLSR…SQSGTVSDAE (176 aa)) are disordered. Serine 17, serine 133, serine 137, and serine 140 each carry phosphoserine. The segment covering 128–143 (DEVVVSEAESHVSGVS) has biased composition (low complexity). Positions 155–172 (NKANSQRDSSQESQSGTV) are enriched in polar residues. Phosphoserine occurs at positions 173 and 183. Lysine 210 participates in a covalent cross-link: Glycyl lysine isopeptide (Lys-Gly) (interchain with G-Cter in SUMO2). Serine 229, serine 240, serine 248, and serine 255 each carry phosphoserine. Positions 231 to 255 (ATQLSARPLSQRNMPNVSDSETYNS) are enriched in polar residues. 4 disordered regions span residues 231 to 277 (ATQL…HQNL), 312 to 353 (KVIN…QLSS), 377 to 480 (DKRG…AEDL), and 501 to 552 (DKNF…DLLS). Residue lysine 317 forms a Glycyl lysine isopeptide (Lys-Gly) (interchain with G-Cter in SUMO2) linkage. The segment covering 321-353 (RSLSEAQDTSLQQSVSQNHSSTPNKKPTFQLSS) has biased composition (polar residues). Serine 324 and serine 330 each carry phosphoserine. Glycyl lysine isopeptide (Lys-Gly) (interchain with G-Cter in SUMO2) cross-links involve residues lysine 345 and lysine 384. Residues 377–387 (DKRGGSGKKSD) show a composition bias toward basic and acidic residues. Residues 431–440 (LSMTQDTTDS) are compositionally biased toward polar residues. Over residues 447-456 (SSDESQQSDS) the composition is skewed to low complexity. A phosphoserine mark is found at serine 476 and serine 512. The stretch at 512 to 541 (SEVAIEEEKEEEEKEEENSEEDSSDSDENK) forms a coiled coil. The segment covering 515-550 (AIEEEKEEEEKEEENSEEDSSDSDENKDESSDEEDL) has biased composition (acidic residues). The tdBR region; mediates interaction with DNTT stretch occupies residues 550–607 (LLSNTKSKLLKLTSSSIDPGLNIKQLGGLYINFNVDKLQPHKETLTQIKEKKKNELLQ). Glycyl lysine isopeptide (Lys-Gly) (interchain with G-Cter in SUMO2) cross-links involve residues lysine 560, lysine 586, and lysine 608. At threonine 612 the chain carries Phosphothreonine. The disordered stretch occupies residues 621–647 (VPPYSESKHRLQKQRRKERQKTAGNGW). Residue lysine 628 forms a Glycyl lysine isopeptide (Lys-Gly) (interchain with G-Cter in SUMO2) linkage. Residues 630–639 (RLQKQRRKER) show a composition bias toward basic residues. Glycyl lysine isopeptide (Lys-Gly) (interchain with G-Cter in SUMO2) cross-links involve residues lysine 651, lysine 660, lysine 688, and lysine 733.

Forms a ternary complex with DNTT and core histone; interaction with PCNA releases DNTT and H2A/H2B histones from this ternary complex. Interacts with ESR1, ESR2, PPARG and RXRA. Part of the small subunit (SSU) processome, composed of more than 70 proteins and the RNA chaperone small nucleolar RNA (snoRNA) U3.

Its subcellular location is the nucleus. The protein resides in the nucleolus. Its function is as follows. Regulates the transcriptional activity of DNTT and ESR1. May function as a chromatin remodeling protein. Part of the small subunit (SSU) processome, first precursor of the small eukaryotic ribosomal subunit. During the assembly of the SSU processome in the nucleolus, many ribosome biogenesis factors, an RNA chaperone and ribosomal proteins associate with the nascent pre-rRNA and work in concert to generate RNA folding, modifications, rearrangements and cleavage as well as targeted degradation of pre-ribosomal RNA by the RNA exosome. This Mus musculus (Mouse) protein is Deoxynucleotidyltransferase terminal-interacting protein 2 (Dnttip2).